Reading from the N-terminus, the 379-residue chain is Cytochrome b (379 aa).

The next 4 membrane-spanning stretches (helical) occupy residues 33–53 (FGSL…FLAM), 77–98 (WTIR…FIHV), 113–133 (WNIG…GYVL), and 178–198 (FFAL…IHLL). His83 and His97 together coordinate heme b. Heme b-binding residues include His182 and His196. Residue His201 coordinates a ubiquinone. 4 helical membrane passes run 226–246 (TKDF…TLFY), 288–308 (LGGV…PFLQ), 320–340 (LSQF…WIGG), and 347–367 (FINI…FIMP).

The protein belongs to the cytochrome b family. As to quaternary structure, the cytochrome bc1 complex contains 11 subunits: 3 respiratory subunits (MT-CYB, CYC1 and UQCRFS1), 2 core proteins (UQCRC1 and UQCRC2) and 6 low-molecular weight proteins (UQCRH/QCR6, UQCRB/QCR7, UQCRQ/QCR8, UQCR10/QCR9, UQCR11/QCR10 and a cleavage product of UQCRFS1). This cytochrome bc1 complex then forms a dimer. Requires heme b as cofactor.

The protein resides in the mitochondrion inner membrane. Its function is as follows. Component of the ubiquinol-cytochrome c reductase complex (complex III or cytochrome b-c1 complex) that is part of the mitochondrial respiratory chain. The b-c1 complex mediates electron transfer from ubiquinol to cytochrome c. Contributes to the generation of a proton gradient across the mitochondrial membrane that is then used for ATP synthesis. This chain is Cytochrome b (MT-CYB), found in Lepilemur aeeclis (Sportive lemur).